Consider the following 437-residue polypeptide: Succinyl-CoA:cyclohexane-1-carboxylate CoA transferase (437 aa).

221–225 (GWGGI) contacts CoA. Catalysis depends on Glu-244, which acts as the 5-glutamyl coenzyme A thioester intermediate. The CoA site is built by Leu-319, Gly-342, and Lys-367.

The protein belongs to the acetyl-CoA hydrolase/transferase family. In terms of assembly, homodimer.

It carries out the reaction cyclohexane-1-carboxylate + succinyl-CoA = cyclohexane-1-carbonyl-CoA + succinate. The enzyme catalyses cyclohexane-1-carboxylate + butanoyl-CoA = cyclohexane-1-carbonyl-CoA + butanoate. Functionally, acyl-CoA transferase involved in the anaerobic degradation of cyclohexane carboxylic acid (CHC). Catalyzes the activation of CHC to cyclohexane-1-carbonyl-CoA (CHCoA). Benzoic acid and cyclohex-1-ene-1-carboxylic acid can also be used as substrates, but with lower specific activity. Shows highest activity with succinyl-CoA and butanoyl-coA as a CoA donor, and lower activity with crotonyl-CoA, acetyl-CoA, glutaryl-CoA, CH1eneCoA, propionyl-CoA and acetoacetyl-CoA. In vitro, the enzyme can use butanoyl-coA as a CoA donor with greater efficiency than succinyl-CoA. However, succinyl-CoA is the most abundant CoA ester in exponentially grown cells, whereas butanoyl-coA is hardly detectable, indicating that succinyl-CoA is the natural CoA donor for CHC activation. The chain is Succinyl-CoA:cyclohexane-1-carboxylate CoA transferase from Geobacter metallireducens (strain ATCC 53774 / DSM 7210 / GS-15).